Consider the following 298-residue polypeptide: GTP cyclohydrolase FolE2 (298 aa).

Belongs to the GTP cyclohydrolase IV family.

It catalyses the reaction GTP + H2O = 7,8-dihydroneopterin 3'-triphosphate + formate + H(+). It participates in cofactor biosynthesis; 7,8-dihydroneopterin triphosphate biosynthesis; 7,8-dihydroneopterin triphosphate from GTP: step 1/1. Functionally, converts GTP to 7,8-dihydroneopterin triphosphate. This Neisseria meningitidis serogroup B (strain ATCC BAA-335 / MC58) protein is GTP cyclohydrolase FolE2.